A 555-amino-acid chain; its full sequence is Adenine deaminase (555 aa).

This sequence belongs to the metallo-dependent hydrolases superfamily. Adenine deaminase family. Mn(2+) serves as cofactor.

The catalysed reaction is adenine + H2O + H(+) = hypoxanthine + NH4(+). In Methanosarcina mazei (strain ATCC BAA-159 / DSM 3647 / Goe1 / Go1 / JCM 11833 / OCM 88) (Methanosarcina frisia), this protein is Adenine deaminase.